Consider the following 360-residue polypeptide: DNA replication and repair protein RecF (360 aa).

30–37 serves as a coordination point for ATP; that stretch reads GHNGSGKT.

Belongs to the RecF family.

The protein localises to the cytoplasm. Its function is as follows. The RecF protein is involved in DNA metabolism; it is required for DNA replication and normal SOS inducibility. RecF binds preferentially to single-stranded, linear DNA. It also seems to bind ATP. The protein is DNA replication and repair protein RecF of Haemophilus ducreyi (strain 35000HP / ATCC 700724).